The primary structure comprises 387 residues: Gamma-butyrobetaine dioxygenase (387 aa).

Residues Cys-38, Cys-40, Cys-43, and His-82 each contribute to the Zn(2+) site. His-202, Asp-204, and His-347 together coordinate Fe cation. Ser-351 carries the phosphoserine modification.

This sequence belongs to the gamma-BBH/TMLD family. Fe(2+) is required as a cofactor. Requires L-ascorbate as cofactor. Expressed in the liver and in some extend in the testis and the epididymis.

It localises to the cytoplasm. It carries out the reaction 4-(trimethylamino)butanoate + 2-oxoglutarate + O2 = carnitine + succinate + CO2. It participates in amine and polyamine biosynthesis; carnitine biosynthesis. Functionally, catalyzes the formation of L-carnitine from gamma-butyrobetaine. The polypeptide is Gamma-butyrobetaine dioxygenase (Bbox1) (Rattus norvegicus (Rat)).